The following is a 523-amino-acid chain: 3-hydroxybenzoate--CoA/4-hydroxybenzoate--CoA ligase (523 aa).

It belongs to the ATP-dependent AMP-binding enzyme family. Benzoate-CoA ligase subfamily.

The catalysed reaction is 4-hydroxybenzoate + ATP + CoA = 4-hydroxybenzoyl-CoA + AMP + diphosphate. It carries out the reaction 3-hydroxybenzoate + ATP + CoA = 3-hydroxybenzoyl-CoA + AMP + diphosphate. Its function is as follows. Catalyzes the ligation of 3-hydroxybenzoate or 4-hydroxybenzoate and CoA at the expense of ATP. The enzyme shows low activity towards benzoate, 4-aminobenzoate, 3-aminobenzoate, 3-fluorobenzoate, 4-fluorobenzoate, 3-chlorobenzoate, and 4-chlorobenzoate. There is no activity with 3,4-dihydroxybenzoate, 2,3-dihydroxybenzoate, and 2-hydroxybenzoate as substrates. The polypeptide is 3-hydroxybenzoate--CoA/4-hydroxybenzoate--CoA ligase (hcl) (Thauera aromatica).